The following is a 264-amino-acid chain: Indole-3-glycerol phosphate synthase (264 aa).

It belongs to the TrpC family.

It catalyses the reaction 1-(2-carboxyphenylamino)-1-deoxy-D-ribulose 5-phosphate + H(+) = (1S,2R)-1-C-(indol-3-yl)glycerol 3-phosphate + CO2 + H2O. The protein operates within amino-acid biosynthesis; L-tryptophan biosynthesis; L-tryptophan from chorismate: step 4/5. The polypeptide is Indole-3-glycerol phosphate synthase (Polaromonas sp. (strain JS666 / ATCC BAA-500)).